A 390-amino-acid chain; its full sequence is MKKISILGSTGSIGTQTLDIVTDHPDKFQVVGLATGNNIQLLSEQIRQFRPQIVAINNESQLEDLKSLISDLDYTPIILAGKEGVIEVARYGDSESVVTGIVGCAGLLPTIAAITAGKDIALANKETLIAGGPVVLPLVEKHRVKLLPADSEHSAIFQCLQGVPTGGLKKIILTASGGAFRDLPVEKLPQVTVADALKHPNWSMGRKITIDSATLMNKGLEVIEAHYLFGVDYNAIDIVIHPQSIIHSLIELQDTSVLAQLGWPDMRLPLLYALSWPERIYTDWEPLNLVKAGSLTFKEPDHQKYPCMGLAYAAGRAGGAMPAVLNAANEQAVALFLEEKISFLDIPRVIEKVCDRFAIHNTSTPSLDDILAADNWARQEVSNCLIANPV.

Threonine 10, glycine 11, serine 12, isoleucine 13, glycine 36, asparagine 38, and asparagine 124 together coordinate NADPH. Lysine 125 serves as a coordination point for 1-deoxy-D-xylulose 5-phosphate. NADPH is bound at residue glutamate 126. Aspartate 150 serves as a coordination point for Mn(2+). 1-deoxy-D-xylulose 5-phosphate-binding residues include serine 151, glutamate 152, serine 176, and histidine 199. Glutamate 152 provides a ligand contact to Mn(2+). Residue glycine 205 participates in NADPH binding. 1-deoxy-D-xylulose 5-phosphate contacts are provided by serine 212, asparagine 217, lysine 218, and glutamate 221. Glutamate 221 lines the Mn(2+) pocket.

Belongs to the DXR family. It depends on Mg(2+) as a cofactor. Mn(2+) is required as a cofactor.

The catalysed reaction is 2-C-methyl-D-erythritol 4-phosphate + NADP(+) = 1-deoxy-D-xylulose 5-phosphate + NADPH + H(+). The protein operates within isoprenoid biosynthesis; isopentenyl diphosphate biosynthesis via DXP pathway; isopentenyl diphosphate from 1-deoxy-D-xylulose 5-phosphate: step 1/6. Functionally, catalyzes the NADPH-dependent rearrangement and reduction of 1-deoxy-D-xylulose-5-phosphate (DXP) to 2-C-methyl-D-erythritol 4-phosphate (MEP). This chain is 1-deoxy-D-xylulose 5-phosphate reductoisomerase, found in Microcystis aeruginosa (strain NIES-843 / IAM M-2473).